Here is a 449-residue protein sequence, read N- to C-terminus: Exodeoxyribonuclease 7 large subunit (449 aa).

Belongs to the XseA family. Heterooligomer composed of large and small subunits.

It localises to the cytoplasm. It carries out the reaction Exonucleolytic cleavage in either 5'- to 3'- or 3'- to 5'-direction to yield nucleoside 5'-phosphates.. In terms of biological role, bidirectionally degrades single-stranded DNA into large acid-insoluble oligonucleotides, which are then degraded further into small acid-soluble oligonucleotides. This is Exodeoxyribonuclease 7 large subunit from Salmonella agona (strain SL483).